Consider the following 329-residue polypeptide: 4-hydroxythreonine-4-phosphate dehydrogenase (329 aa).

Residues His136 and Thr137 each coordinate substrate. 3 residues coordinate a divalent metal cation: His166, His211, and His266. The substrate site is built by Lys274, Asn283, and Arg292.

The protein belongs to the PdxA family. As to quaternary structure, homodimer. Zn(2+) serves as cofactor. Mg(2+) is required as a cofactor. The cofactor is Co(2+).

The protein resides in the cytoplasm. The catalysed reaction is 4-(phosphooxy)-L-threonine + NAD(+) = 3-amino-2-oxopropyl phosphate + CO2 + NADH. The protein operates within cofactor biosynthesis; pyridoxine 5'-phosphate biosynthesis; pyridoxine 5'-phosphate from D-erythrose 4-phosphate: step 4/5. Catalyzes the NAD(P)-dependent oxidation of 4-(phosphooxy)-L-threonine (HTP) into 2-amino-3-oxo-4-(phosphooxy)butyric acid which spontaneously decarboxylates to form 3-amino-2-oxopropyl phosphate (AHAP). The chain is 4-hydroxythreonine-4-phosphate dehydrogenase from Neisseria meningitidis serogroup A / serotype 4A (strain DSM 15465 / Z2491).